A 292-amino-acid polypeptide reads, in one-letter code: Ribosomal protein L11 methyltransferase (292 aa).

The S-adenosyl-L-methionine site is built by threonine 144, glycine 165, aspartate 187, and asparagine 229.

This sequence belongs to the methyltransferase superfamily. PrmA family.

The protein localises to the cytoplasm. It carries out the reaction L-lysyl-[protein] + 3 S-adenosyl-L-methionine = N(6),N(6),N(6)-trimethyl-L-lysyl-[protein] + 3 S-adenosyl-L-homocysteine + 3 H(+). Methylates ribosomal protein L11. The polypeptide is Ribosomal protein L11 methyltransferase (Pseudomonas fluorescens (strain Pf0-1)).